The following is a 707-amino-acid chain: Ribosomal RNA large subunit methyltransferase K/L (707 aa).

The THUMP domain occupies 44–155; that stretch reads VIYNLCLWSR…NDILTVSFDL (112 aa).

The protein belongs to the methyltransferase superfamily. RlmKL family.

Its subcellular location is the cytoplasm. It catalyses the reaction guanosine(2445) in 23S rRNA + S-adenosyl-L-methionine = N(2)-methylguanosine(2445) in 23S rRNA + S-adenosyl-L-homocysteine + H(+). The enzyme catalyses guanosine(2069) in 23S rRNA + S-adenosyl-L-methionine = N(2)-methylguanosine(2069) in 23S rRNA + S-adenosyl-L-homocysteine + H(+). Specifically methylates the guanine in position 2445 (m2G2445) and the guanine in position 2069 (m7G2069) of 23S rRNA. In Legionella pneumophila (strain Corby), this protein is Ribosomal RNA large subunit methyltransferase K/L.